The following is a 473-amino-acid chain: Fumarate hydratase class II 2 (473 aa).

The segment at 1-28 is disordered; it reads MAKSARTKTARPATRTETDSFGPIEVPS. Substrate contacts are provided by residues 108–110, 139–142, 149–151, and Thr197; these read SGT, HPND, and SSN. His198 serves as the catalytic Proton donor/acceptor. Ser328 is an active-site residue. Residues Ser329 and 334-336 each bind substrate; that span reads KVN.

It belongs to the class-II fumarase/aspartase family. Fumarase subfamily. Homotetramer.

The protein localises to the cytoplasm. The enzyme catalyses (S)-malate = fumarate + H2O. It functions in the pathway carbohydrate metabolism; tricarboxylic acid cycle; (S)-malate from fumarate: step 1/1. Functionally, involved in the TCA cycle. Catalyzes the stereospecific interconversion of fumarate to L-malate. This chain is Fumarate hydratase class II 2, found in Bradyrhizobium diazoefficiens (strain JCM 10833 / BCRC 13528 / IAM 13628 / NBRC 14792 / USDA 110).